Consider the following 931-residue polypeptide: Transportin (931 aa).

19 HEAT repeats span residues 10 to 37 (GLKQ…EELD), 42 to 79 (VPDY…QYFE), 88 to 121 (YIKR…KSCF), 127 to 164 (LLPA…LDSD), 171 to 201 (NQLI…YFII), 214 to 241 (FLKG…VTLV), 253 to 280 (KDVI…FWTA), 296 to 421 (PVLV…LSGI), 430 to 459 (VTLP…GAIA), 471 to 498 (SKVI…TLSR), 512 to 545 (LHPL…EEEA), 553 to 586 (LQMI…AKVV), 594 to 632 (ELIN…SSIG), 640 to 693 (SLFF…GIGT), 704 to 735 (LPHL…KFCL), 743 to 776 (PDYL…IRMP), 784 to 819 (VAIR…IVSP), 827 to 860 (DKFI…INNN), and 869 to 900 (VYIC…KTSM). Positions 32-99 (IREELDKFHS…KREILPVLSD (68 aa)) constitute an Importin N-terminal domain. Positions 317–401 (DQGDDSMTPD…DDDDDDDGFE (85 aa)) are disordered. A compositionally biased stretch (low complexity) spans 358-381 (DNNNNSNNNNSSNNNSSNNNNNNN). The segment covering 382-401 (NEDDEEYNDDDDDDDDDGFE) has biased composition (acidic residues).

This sequence belongs to the importin beta family. Importin beta-2 subfamily. As to quaternary structure, forms a complex with an importin alpha subunit.

The protein localises to the cytoplasm. It is found in the nucleus envelope. Functionally, functions in nuclear protein import via a substrate-importin alpha-beta transport complex that passes though the nuclear pore complexes (NPC). Mediates docking of the substrate-importin complex to distinct nucleoporins. The chain is Transportin (tnpo) from Dictyostelium discoideum (Social amoeba).